Reading from the N-terminus, the 697-residue chain is Elongation factor G 1 (697 aa).

Residues 8–283 (ERYRNFGIMA…AVVDFLPSPV (276 aa)) enclose the tr-type G domain. GTP is bound by residues 17–24 (AHIDAGKT), 81–85 (DTPGH), and 135–138 (NKMD).

This sequence belongs to the TRAFAC class translation factor GTPase superfamily. Classic translation factor GTPase family. EF-G/EF-2 subfamily.

The protein localises to the cytoplasm. Catalyzes the GTP-dependent ribosomal translocation step during translation elongation. During this step, the ribosome changes from the pre-translocational (PRE) to the post-translocational (POST) state as the newly formed A-site-bound peptidyl-tRNA and P-site-bound deacylated tRNA move to the P and E sites, respectively. Catalyzes the coordinated movement of the two tRNA molecules, the mRNA and conformational changes in the ribosome. This chain is Elongation factor G 1, found in Anaeromyxobacter dehalogenans (strain 2CP-C).